Reading from the N-terminus, the 336-residue chain is MAKSLNILIAALSLIAFSPFCLCSKAYGSGGYLFPQFYDQSCPKAQEIVQSIVAKAFEHDPRMPASLLRLHFHDCFVKGCDASILLDSSGTIISEKRSNPNRNSARGFELIEEIKHALEQECPETVSCADILALAARDSTVITGGPSWEVPLGRRDARGASLSGSNNDIPAPNNTFQTILTKFKRQGLDLVDLVSLSGSHTIGNSRCTSFRQRLYNQSGNGKPDMTLSQYYATLLRQRCPRSGGDQTLFFLDFATPFKFDNHYFKNLIMYKGLLSSDEILFTKNKQSKELVELYAENQEAFFEQFAKSMVKMGNISPLTGAKGEIRRICRRVNHAY.

A signal peptide spans 1–23; sequence MAKSLNILIAALSLIAFSPFCLC. Cystine bridges form between Cys-42-Cys-122, Cys-75-Cys-80, Cys-128-Cys-329, and Cys-207-Cys-239. Catalysis depends on His-73, which acts as the Proton acceptor. 5 residues coordinate Ca(2+): Asp-74, Val-77, Gly-79, Asp-81, and Ser-83. Pro-170 serves as a coordination point for substrate. Asn-173 is a glycosylation site (N-linked (GlcNAc...) asparagine). Residue His-200 coordinates heme b. Thr-201 is a Ca(2+) binding site. Asn-216 carries N-linked (GlcNAc...) asparagine glycosylation. Ca(2+)-binding residues include Asp-252, Thr-255, and Asp-260.

Belongs to the peroxidase family. Classical plant (class III) peroxidase subfamily. The cofactor is heme b. Ca(2+) is required as a cofactor. Slightly expressed in roots.

It localises to the secreted. The enzyme catalyses 2 a phenolic donor + H2O2 = 2 a phenolic radical donor + 2 H2O. Its function is as follows. Removal of H(2)O(2), oxidation of toxic reductants, biosynthesis and degradation of lignin, suberization, auxin catabolism, response to environmental stresses such as wounding, pathogen attack and oxidative stress. These functions might be dependent on each isozyme/isoform in each plant tissue. The polypeptide is Peroxidase 72 (PER72) (Arabidopsis thaliana (Mouse-ear cress)).